Reading from the N-terminus, the 438-residue chain is tRNA-dihydrouridine(16/17) synthase [NAD(P)(+)]-like (438 aa).

FMN contacts are provided by residues 23-25 (PMV) and Gln-79. The active-site Proton donor is Cys-108. Residues Lys-147, His-175, 208-210 (NGN), and 232-233 (AE) contribute to the FMN site. The interval 343-387 (GPKEGSKENSSGRSKRALEEEEGSMEGLSKNKLKKQLRNPHKTFD) is disordered. Over residues 373–383 (NKLKKQLRNPH) the composition is skewed to basic residues.

Belongs to the Dus family. Dus1 subfamily. FMN is required as a cofactor.

The protein localises to the cytoplasm. It is found in the nucleus. The enzyme catalyses 5,6-dihydrouridine(16) in tRNA + NADP(+) = uridine(16) in tRNA + NADPH + H(+). It catalyses the reaction 5,6-dihydrouridine(16) in tRNA + NAD(+) = uridine(16) in tRNA + NADH + H(+). The catalysed reaction is 5,6-dihydrouridine(17) in tRNA + NAD(+) = uridine(17) in tRNA + NADH + H(+). It carries out the reaction 5,6-dihydrouridine(17) in tRNA + NADP(+) = uridine(17) in tRNA + NADPH + H(+). Catalyzes the synthesis of dihydrouridine, a modified base found in the D-loop of most tRNAs. Specifically modifies U16 and U17 in cytoplasmic tRNAs. Affects the level of some mature tRNA and thereby the total cellular translation. The sequence is that of tRNA-dihydrouridine(16/17) synthase [NAD(P)(+)]-like (Dus1l) from Rattus norvegicus (Rat).